Here is a 108-residue protein sequence, read N- to C-terminus: uncharacterized protein (108 aa).

Basic and acidic residues-rich tracts occupy residues 1–15 (MSEA…EVLV) and 53–69 (KLKD…RNSE). Residues 1-77 (MSEAKDNGSR…SELDQDEEDK (77 aa)) form a disordered region.

This is an uncharacterized protein from Homo sapiens (Human).